Consider the following 371-residue polypeptide: 4-hydroxy-3-methylbut-2-en-1-yl diphosphate synthase (flavodoxin) (371 aa).

Residues Cys-270, Cys-273, Cys-305, and Glu-312 each contribute to the [4Fe-4S] cluster site.

It belongs to the IspG family. [4Fe-4S] cluster serves as cofactor.

The enzyme catalyses (2E)-4-hydroxy-3-methylbut-2-enyl diphosphate + oxidized [flavodoxin] + H2O + 2 H(+) = 2-C-methyl-D-erythritol 2,4-cyclic diphosphate + reduced [flavodoxin]. It functions in the pathway isoprenoid biosynthesis; isopentenyl diphosphate biosynthesis via DXP pathway; isopentenyl diphosphate from 1-deoxy-D-xylulose 5-phosphate: step 5/6. Converts 2C-methyl-D-erythritol 2,4-cyclodiphosphate (ME-2,4cPP) into 1-hydroxy-2-methyl-2-(E)-butenyl 4-diphosphate. The chain is 4-hydroxy-3-methylbut-2-en-1-yl diphosphate synthase (flavodoxin) from Shewanella halifaxensis (strain HAW-EB4).